Reading from the N-terminus, the 64-residue chain is UPF0434 protein MADE_1009415 (64 aa).

The protein belongs to the UPF0434 family.

This is UPF0434 protein MADE_1009415 from Alteromonas mediterranea (strain DSM 17117 / CIP 110805 / LMG 28347 / Deep ecotype).